The sequence spans 310 residues: Ribosomal RNA small subunit methyltransferase H (310 aa).

S-adenosyl-L-methionine is bound by residues 32 to 34, aspartate 52, phenylalanine 79, aspartate 100, and glutamine 107; that span reads GGH.

It belongs to the methyltransferase superfamily. RsmH family.

It is found in the cytoplasm. The catalysed reaction is cytidine(1402) in 16S rRNA + S-adenosyl-L-methionine = N(4)-methylcytidine(1402) in 16S rRNA + S-adenosyl-L-homocysteine + H(+). Functionally, specifically methylates the N4 position of cytidine in position 1402 (C1402) of 16S rRNA. This chain is Ribosomal RNA small subunit methyltransferase H, found in Bacillus thuringiensis subsp. konkukian (strain 97-27).